The chain runs to 215 residues: NAD(P)H-hydrate epimerase (215 aa).

The region spanning 10–212 (SRELDDKTIN…DIGIYRGNAF (203 aa)) is the YjeF N-terminal domain. Residue 59-63 (NNGGD) coordinates (6S)-NADPHX. 2 residues coordinate K(+): Asn-60 and Asp-122. Residues 126–132 (GSGLSRN) and Asp-155 contribute to the (6S)-NADPHX site. Ser-158 serves as a coordination point for K(+).

It belongs to the NnrE/AIBP family. The cofactor is K(+).

The catalysed reaction is (6R)-NADHX = (6S)-NADHX. It carries out the reaction (6R)-NADPHX = (6S)-NADPHX. Functionally, catalyzes the epimerization of the S- and R-forms of NAD(P)HX, a damaged form of NAD(P)H that is a result of enzymatic or heat-dependent hydration. This is a prerequisite for the S-specific NAD(P)H-hydrate dehydratase to allow the repair of both epimers of NAD(P)HX. The sequence is that of NAD(P)H-hydrate epimerase from Lentilactobacillus buchneri (strain NRRL B-30929) (Lactobacillus buchneri).